Reading from the N-terminus, the 436-residue chain is Serine hydroxymethyltransferase (436 aa).

Residues leucine 133 and 137–139 (GHL) each bind (6S)-5,6,7,8-tetrahydrofolate. Lysine 242 carries the post-translational modification N6-(pyridoxal phosphate)lysine. Residue 366 to 368 (SPF) coordinates (6S)-5,6,7,8-tetrahydrofolate.

The protein belongs to the SHMT family. Homodimer. Requires pyridoxal 5'-phosphate as cofactor.

It localises to the cytoplasm. The enzyme catalyses (6R)-5,10-methylene-5,6,7,8-tetrahydrofolate + glycine + H2O = (6S)-5,6,7,8-tetrahydrofolate + L-serine. Its pathway is one-carbon metabolism; tetrahydrofolate interconversion. It functions in the pathway amino-acid biosynthesis; glycine biosynthesis; glycine from L-serine: step 1/1. Functionally, catalyzes the reversible interconversion of serine and glycine with tetrahydrofolate (THF) serving as the one-carbon carrier. This reaction serves as the major source of one-carbon groups required for the biosynthesis of purines, thymidylate, methionine, and other important biomolecules. Also exhibits THF-independent aldolase activity toward beta-hydroxyamino acids, producing glycine and aldehydes, via a retro-aldol mechanism. This is Serine hydroxymethyltransferase from Novosphingobium aromaticivorans (strain ATCC 700278 / DSM 12444 / CCUG 56034 / CIP 105152 / NBRC 16084 / F199).